A 50-amino-acid polypeptide reads, in one-letter code: ATP synthase protein 8 (50 aa).

A helical membrane pass occupies residues 13–32; sequence ITFTFIILAITVYILSKYIL.

The protein belongs to the ATPase protein 8 family. F-type ATPases have 2 components, CF(1) - the catalytic core - and CF(0) - the membrane proton channel.

It is found in the mitochondrion membrane. Functionally, mitochondrial membrane ATP synthase (F(1)F(0) ATP synthase or Complex V) produces ATP from ADP in the presence of a proton gradient across the membrane which is generated by electron transport complexes of the respiratory chain. F-type ATPases consist of two structural domains, F(1) - containing the extramembraneous catalytic core and F(0) - containing the membrane proton channel, linked together by a central stalk and a peripheral stalk. During catalysis, ATP synthesis in the catalytic domain of F(1) is coupled via a rotary mechanism of the central stalk subunits to proton translocation. Part of the complex F(0) domain. Minor subunit located with subunit a in the membrane. The polypeptide is ATP synthase protein 8 (ATP8) (Podospora anserina (strain S / ATCC MYA-4624 / DSM 980 / FGSC 10383) (Pleurage anserina)).